The chain runs to 570 residues: Probable D-xylulose kinase A (570 aa).

The substrate site is built by H98, D279, and N280. Residues W363, 470–471 (GG), and N474 each bind ATP.

Belongs to the FGGY kinase family.

The protein resides in the cytoplasm. The enzyme catalyses D-xylulose + ATP = D-xylulose 5-phosphate + ADP + H(+). In terms of biological role, highly specific D-xylulose kinase which participates in the catabolism of xylose. Xylose is a major component of hemicelluloses such as xylan. Most fungi utilize D-xylose via three enzymatic reactions, xylose reductase (XR), xylitol dehydrogenase (XDH), and xylulokinase, to form xylulose 5-phosphate, which enters pentose phosphate pathway. The protein is Probable D-xylulose kinase A (xkiA) of Arthroderma otae (strain ATCC MYA-4605 / CBS 113480) (Microsporum canis).